A 1060-amino-acid polypeptide reads, in one-letter code: Carbamoyl phosphate synthase large chain (1060 aa).

The carboxyphosphate synthetic domain stretch occupies residues 1-401; that stretch reads MPKRTDIRKI…SLLKACRSLE (401 aa). ATP-binding residues include Arg129, Arg169, Gly175, Gly176, Arg208, Ile210, Glu215, Gly241, Ile242, His243, Gln284, and Glu298. Positions 133 to 327 constitute an ATP-grasp 1 domain; sequence KQLMEELNQP…IAKLAAKIAV (195 aa). Mg(2+) is bound by residues Gln284, Glu298, and Asn300. Gln284, Glu298, and Asn300 together coordinate Mn(2+). Residues 402–546 are oligomerization domain; it reads IGVDHIKIAD…YSTYAVENES (145 aa). Residues 547–929 are carbamoyl phosphate synthetic domain; sequence LISDKASILV…ALYKAFEAAY (383 aa). In terms of domain architecture, ATP-grasp 2 spans 671–861; the sequence is EATLQALNIP…MAQVATKVIL (191 aa). Residues Arg707, Ala746, Leu748, Glu752, Gly777, Val778, His779, Ser780, Gln820, and Glu832 each coordinate ATP. Mg(2+) contacts are provided by Gln820, Glu832, and Asn834. Residues Gln820, Glu832, and Asn834 each contribute to the Mn(2+) site. One can recognise an MGS-like domain in the interval 930 to 1060; it reads LHMPDYGNIV…SRAFTLKVLD (131 aa). An allosteric domain region spans residues 930–1060; the sequence is LHMPDYGNIV…SRAFTLKVLD (131 aa).

This sequence belongs to the CarB family. In terms of assembly, composed of two chains; the small (or glutamine) chain promotes the hydrolysis of glutamine to ammonia, which is used by the large (or ammonia) chain to synthesize carbamoyl phosphate. Tetramer of heterodimers (alpha,beta)4. Mg(2+) serves as cofactor. It depends on Mn(2+) as a cofactor.

The catalysed reaction is hydrogencarbonate + L-glutamine + 2 ATP + H2O = carbamoyl phosphate + L-glutamate + 2 ADP + phosphate + 2 H(+). It carries out the reaction hydrogencarbonate + NH4(+) + 2 ATP = carbamoyl phosphate + 2 ADP + phosphate + 2 H(+). It functions in the pathway amino-acid biosynthesis; L-arginine biosynthesis; carbamoyl phosphate from bicarbonate: step 1/1. Its pathway is pyrimidine metabolism; UMP biosynthesis via de novo pathway; (S)-dihydroorotate from bicarbonate: step 1/3. Functionally, large subunit of the glutamine-dependent carbamoyl phosphate synthetase (CPSase). CPSase catalyzes the formation of carbamoyl phosphate from the ammonia moiety of glutamine, carbonate, and phosphate donated by ATP, constituting the first step of 2 biosynthetic pathways, one leading to arginine and/or urea and the other to pyrimidine nucleotides. The large subunit (synthetase) binds the substrates ammonia (free or transferred from glutamine from the small subunit), hydrogencarbonate and ATP and carries out an ATP-coupled ligase reaction, activating hydrogencarbonate by forming carboxy phosphate which reacts with ammonia to form carbamoyl phosphate. This Streptococcus agalactiae serotype Ia (strain ATCC 27591 / A909 / CDC SS700) protein is Carbamoyl phosphate synthase large chain.